Reading from the N-terminus, the 62-residue chain is Large ribosomal subunit protein bL32 (62 aa).

Positions 1–19 (MPNPKRRHSKARTGNRRAH) are enriched in basic residues. The interval 1 to 23 (MPNPKRRHSKARTGNRRAHDHLS) is disordered.

It belongs to the bacterial ribosomal protein bL32 family.

The sequence is that of Large ribosomal subunit protein bL32 from Koribacter versatilis (strain Ellin345).